Here is a 434-residue protein sequence, read N- to C-terminus: 5'-deoxyadenosine deaminase (434 aa).

Residues H63 and H65 each contribute to the Zn(2+) site. Positions 92 and 184 each coordinate substrate. H211 is a binding site for Zn(2+). E214 and D299 together coordinate substrate. Zn(2+) is bound at residue D299.

This sequence belongs to the metallo-dependent hydrolases superfamily. MTA/SAH deaminase family. In terms of assembly, homotetramer. The cofactor is Zn(2+).

It catalyses the reaction 5'-deoxyadenosine + H2O + H(+) = 5'-deoxyinosine + NH4(+). It carries out the reaction S-adenosyl-L-homocysteine + H2O + H(+) = S-inosyl-L-homocysteine + NH4(+). The catalysed reaction is S-methyl-5'-thioadenosine + H2O + H(+) = S-methyl-5'-thioinosine + NH4(+). The enzyme catalyses adenosine + H2O + H(+) = inosine + NH4(+). It participates in amino-acid biosynthesis; S-adenosyl-L-methionine biosynthesis. In terms of biological role, catalyzes the deamination of three SAM-derived enzymatic products, namely 5'-deoxyadenosine, S-adenosyl-L-homocysteine, and 5'-methylthioadenosine, to produce the inosine analogs. Can also deaminate adenosine. The preferred substrate for this enzyme is 5'-deoxyadenosine, but all these substrates are efficiently deaminated. Likely functions in a S-adenosyl-L-methionine (SAM) recycling pathway from S-adenosyl-L-homocysteine (SAH) produced from SAM-dependent methylation reactions. May also be involved in the recycling of 5'-deoxyadenosine, whereupon the 5'-deoxyribose moiety of 5'-deoxyinosine is further metabolized to deoxyhexoses used for the biosynthesis of aromatic amino acids in methanogens. This chain is 5'-deoxyadenosine deaminase, found in Methanococcoides burtonii (strain DSM 6242 / NBRC 107633 / OCM 468 / ACE-M).